We begin with the raw amino-acid sequence, 402 residues long: Phosphoglycerate kinase (402 aa).

Substrate-binding positions include 24–26 (DFN), Arg40, 63–66 (HFGR), Arg122, and Arg155. Residues Lys206, Gly297, Glu328, and 358–361 (GGDS) each bind ATP.

The protein belongs to the phosphoglycerate kinase family. In terms of assembly, monomer.

The protein localises to the cytoplasm. It carries out the reaction (2R)-3-phosphoglycerate + ATP = (2R)-3-phospho-glyceroyl phosphate + ADP. Its pathway is carbohydrate degradation; glycolysis; pyruvate from D-glyceraldehyde 3-phosphate: step 2/5. The protein is Phosphoglycerate kinase of Prochlorococcus marinus (strain MIT 9312).